The sequence spans 143 residues: Ribonuclease H (143 aa).

Positions 1–136 (MQEIEIFCDG…CDSLAKLEAQ (136 aa)) constitute an RNase H type-1 domain. 4 residues coordinate Mg(2+): D9, E47, D69, and D128.

It belongs to the RNase H family. Monomer. The cofactor is Mg(2+).

It is found in the cytoplasm. It catalyses the reaction Endonucleolytic cleavage to 5'-phosphomonoester.. Functionally, endonuclease that specifically degrades the RNA of RNA-DNA hybrids. In Helicobacter acinonychis (strain Sheeba), this protein is Ribonuclease H.